We begin with the raw amino-acid sequence, 186 residues long: Adenylate kinase (186 aa).

An ATP-binding site is contributed by 14–19 (GAGKGT). An NMP region spans residues 34–63 (STGDILRDHVARGTPLGERVRPIMERGDLV). AMP is bound by residues T35, R40, 61-63 (DLV), 84-87 (GFPR), and Q91. Positions 125–135 (RRAELEGRSDD) are LID. R126 lines the ATP pocket. Residues R132 and R143 each coordinate AMP. G171 serves as a coordination point for ATP.

This sequence belongs to the adenylate kinase family. In terms of assembly, monomer.

Its subcellular location is the cytoplasm. It catalyses the reaction AMP + ATP = 2 ADP. Its pathway is purine metabolism; AMP biosynthesis via salvage pathway; AMP from ADP: step 1/1. Its function is as follows. Catalyzes the reversible transfer of the terminal phosphate group between ATP and AMP. Plays an important role in cellular energy homeostasis and in adenine nucleotide metabolism. In Thermus thermophilus (strain ATCC BAA-163 / DSM 7039 / HB27), this protein is Adenylate kinase.